The chain runs to 254 residues: UPF0246 protein FTF1693c (254 aa).

It belongs to the UPF0246 family.

The polypeptide is UPF0246 protein FTF1693c (Francisella tularensis subsp. tularensis (strain FSC 198)).